The following is a 386-amino-acid chain: GTPase Obg (386 aa).

The Obg domain maps to 1–159 (MKFVDEAVIR…RSLKLELMLL (159 aa)). Positions 160-333 (ADVGLLGMPN…LSLKLVDFID (174 aa)) constitute an OBG-type G domain. GTP-binding positions include 166–173 (GMPNAGKS), 191–195 (FTTLV), 213–216 (DIPG), 283–286 (NKKD), and 314–316 (SAY). Serine 173 and threonine 193 together coordinate Mg(2+). Residues 356–375 (KDSDSLNEDFDDSDDDDFDD) form a disordered region. Over residues 360 to 375 (SLNEDFDDSDDDDFDD) the composition is skewed to acidic residues.

Belongs to the TRAFAC class OBG-HflX-like GTPase superfamily. OBG GTPase family. Monomer. Mg(2+) serves as cofactor.

The protein localises to the cytoplasm. An essential GTPase which binds GTP, GDP and possibly (p)ppGpp with moderate affinity, with high nucleotide exchange rates and a fairly low GTP hydrolysis rate. Plays a role in control of the cell cycle, stress response, ribosome biogenesis and in those bacteria that undergo differentiation, in morphogenesis control. The protein is GTPase Obg of Shewanella sediminis (strain HAW-EB3).